The following is a 59-amino-acid chain: Small ribosomal subunit protein bS21A (59 aa).

This sequence belongs to the bacterial ribosomal protein bS21 family.

In Gloeobacter violaceus (strain ATCC 29082 / PCC 7421), this protein is Small ribosomal subunit protein bS21A.